A 360-amino-acid polypeptide reads, in one-letter code: Methylthioribose-1-phosphate isomerase (360 aa).

The Proton donor role is filled by Asp-252.

Belongs to the eIF-2B alpha/beta/delta subunits family. MtnA subfamily.

It is found in the cytoplasm. The protein resides in the nucleus. The enzyme catalyses 5-(methylsulfanyl)-alpha-D-ribose 1-phosphate = 5-(methylsulfanyl)-D-ribulose 1-phosphate. The protein operates within amino-acid biosynthesis; L-methionine biosynthesis via salvage pathway; L-methionine from S-methyl-5-thio-alpha-D-ribose 1-phosphate: step 1/6. Its function is as follows. Catalyzes the interconversion of methylthioribose-1-phosphate (MTR-1-P) into methylthioribulose-1-phosphate (MTRu-1-P). In Trichoplax adhaerens (Trichoplax reptans), this protein is Methylthioribose-1-phosphate isomerase.